A 362-amino-acid polypeptide reads, in one-letter code: 3-dehydroquinate synthase (362 aa).

Residues 72–77 (SGEQAK), 106–110 (GVVGD), 130–131 (TT), lysine 142, and lysine 151 contribute to the NAD(+) site. Zn(2+) is bound by residues glutamate 184, histidine 246, and histidine 263.

The protein belongs to the sugar phosphate cyclases superfamily. Dehydroquinate synthase family. Requires NAD(+) as cofactor. Co(2+) is required as a cofactor. It depends on Zn(2+) as a cofactor.

It is found in the cytoplasm. It catalyses the reaction 7-phospho-2-dehydro-3-deoxy-D-arabino-heptonate = 3-dehydroquinate + phosphate. It functions in the pathway metabolic intermediate biosynthesis; chorismate biosynthesis; chorismate from D-erythrose 4-phosphate and phosphoenolpyruvate: step 2/7. In terms of biological role, catalyzes the conversion of 3-deoxy-D-arabino-heptulosonate 7-phosphate (DAHP) to dehydroquinate (DHQ). This chain is 3-dehydroquinate synthase, found in Bacillus subtilis (strain 168).